We begin with the raw amino-acid sequence, 364 residues long: GDP-fucose transporter 1 (364 aa).

The next 8 membrane-spanning stretches (helical) occupy residues 34-56 (FVLRALQIALVVSLYWVTSISMV), 76-98 (VTFYQCLVTVLLCKGLSSLATCC), 111-130 (LKVARSVLPLSVVFIGMITF), 140-162 (VAFYNVGRSLTTVFNVLLSYLLL), 167-185 (SFYALLTCSVIIGGFWLGV), 195-214 (SWTGTLFGVLASLCVSLNAI), 227-249 (IWRLTFYNNANACVLFLPLLLAL), and 264-286 (AHFWAMMTLGGLFGFAIGYVTGL). Positions 345–364 (MKKTQEEPHPRENEKSNMEV) are disordered.

It belongs to the TPT transporter family. SLC35C subfamily.

It localises to the golgi apparatus membrane. It catalyses the reaction GMP(out) + GDP-beta-L-fucose(in) = GMP(in) + GDP-beta-L-fucose(out). Its function is as follows. Antiporter specific for GDP-l-fucose and depending on the concomitant reverse transport of GMP. Involved in GDP-fucose import from the cytoplasm into the Golgi lumen. The sequence is that of GDP-fucose transporter 1 (SLC35C1) from Bos taurus (Bovine).